Consider the following 533-residue polypeptide: CWF19-like protein 1 homolog (533 aa).

The interval 290–314 (EMGGAEDGAGNGRKRHNDGGNDGPR) is disordered.

It belongs to the CWF19 family.

This chain is CWF19-like protein 1 homolog, found in Caenorhabditis elegans.